The sequence spans 229 residues: Prolactin (229 aa).

The N-terminal stretch at 1-30 (MDSKVSSQKGSRLLLLLVVSNLLLCQGVVS) is a signal peptide. Cys-34 and Cys-41 are joined by a disulfide. Phosphoserine occurs at positions 56, 64, and 120. Intrachain disulfides connect Cys-88/Cys-204 and Cys-221/Cys-229.

The protein belongs to the somatotropin/prolactin family. In terms of assembly, interacts with PRLR.

Its subcellular location is the secreted. Functionally, prolactin acts primarily on the mammary gland by promoting lactation. The protein is Prolactin (PRL) of Cervus elaphus (Red deer).